The following is a 187-amino-acid chain: Putative manganese efflux pump MntP (187 aa).

Helical transmembrane passes span 3-23 (FYSL…VSLC), 35-55 (HYLI…TIGY), 56-76 (FIGI…AFIL), 107-127 (LALA…FAFL), 129-149 (VNLL…CIIA), and 166-186 (LLGG…HLFF).

It belongs to the MntP (TC 9.B.29) family.

Its subcellular location is the cell inner membrane. Its function is as follows. Probably functions as a manganese efflux pump. This is Putative manganese efflux pump MntP from Campylobacter jejuni subsp. doylei (strain ATCC BAA-1458 / RM4099 / 269.97).